A 421-amino-acid chain; its full sequence is UDP-N-acetylglucosamine 1-carboxyvinyltransferase 1 (421 aa).

22–23 (KN) is a binding site for phosphoenolpyruvate. UDP-N-acetyl-alpha-D-glucosamine is bound at residue R95. C119 functions as the Proton donor in the catalytic mechanism. Position 119 is a 2-(S-cysteinyl)pyruvic acid O-phosphothioketal (C119). UDP-N-acetyl-alpha-D-glucosamine contacts are provided by residues 124 to 128 (RPIEQ), D308, and V330.

The protein belongs to the EPSP synthase family. MurA subfamily.

It is found in the cytoplasm. The catalysed reaction is phosphoenolpyruvate + UDP-N-acetyl-alpha-D-glucosamine = UDP-N-acetyl-3-O-(1-carboxyvinyl)-alpha-D-glucosamine + phosphate. It functions in the pathway cell wall biogenesis; peptidoglycan biosynthesis. In terms of biological role, cell wall formation. Adds enolpyruvyl to UDP-N-acetylglucosamine. In Staphylococcus aureus (strain bovine RF122 / ET3-1), this protein is UDP-N-acetylglucosamine 1-carboxyvinyltransferase 1.